Consider the following 508-residue polypeptide: GMP synthase [glutamine-hydrolyzing] (508 aa).

Residues 1–189 (MILVLDFGSQ…ALLVCGCEKT (189 aa)) form the Glutamine amidotransferase type-1 domain. Cys-78 (nucleophile) is an active-site residue. Active-site residues include His-163 and Glu-165. The 194-residue stretch at 190–383 (WGMQHFAQRE…LGVSQDFLMR (194 aa)) folds into the GMPS ATP-PPase domain. 217 to 223 (SGGVDST) provides a ligand contact to ATP.

Homodimer.

It carries out the reaction XMP + L-glutamine + ATP + H2O = GMP + L-glutamate + AMP + diphosphate + 2 H(+). It participates in purine metabolism; GMP biosynthesis; GMP from XMP (L-Gln route): step 1/1. In terms of biological role, catalyzes the synthesis of GMP from XMP. This Helicobacter pylori (strain J99 / ATCC 700824) (Campylobacter pylori J99) protein is GMP synthase [glutamine-hydrolyzing] (guaA).